Consider the following 202-residue polypeptide: Josephin-1 (202 aa).

Ser15 carries the post-translational modification Phosphoserine. A Josephin domain is found at 23–202 (PPQIYHEKQR…EAHQSWRADV (180 aa)). The active-site Nucleophile is Cys36. His139 functions as the Proton acceptor in the catalytic mechanism.

In terms of assembly, interacts with beta-actin/ACTB. Post-translationally, monoubiquitinated. Ubiquitination activates deubiquitination activity in vitro.

It localises to the cell membrane. The protein resides in the cytoplasm. It catalyses the reaction Thiol-dependent hydrolysis of ester, thioester, amide, peptide and isopeptide bonds formed by the C-terminal Gly of ubiquitin (a 76-residue protein attached to proteins as an intracellular targeting signal).. Its function is as follows. Deubiquitinates monoubiquitinated probes (in vitro). When ubiquitinated, cleaves 'Lys-63'-linked and 'Lys-48'-linked poly-ubiquitin chains (in vitro), hence may act as a deubiquitinating enzyme. May increase macropinocytosis and suppress clathrin- and caveolae-mediated endocytosis. May enhance membrane dynamics and cell motility independently of its catalytic activity. The protein is Josephin-1 (JOSD1) of Bos taurus (Bovine).